The sequence spans 282 residues: Probable protein phosphatase 2C 45 (282 aa).

The region spanning 27–272 is the PPM-type phosphatase domain; the sequence is SYGYASSPGK…DNITCVVVRF (246 aa). Positions 63, 64, 224, and 263 each coordinate Mn(2+).

Belongs to the PP2C family. It depends on Mg(2+) as a cofactor. Requires Mn(2+) as cofactor.

It carries out the reaction O-phospho-L-seryl-[protein] + H2O = L-seryl-[protein] + phosphate. The enzyme catalyses O-phospho-L-threonyl-[protein] + H2O = L-threonyl-[protein] + phosphate. The chain is Probable protein phosphatase 2C 45 from Oryza sativa subsp. japonica (Rice).